The chain runs to 76 residues: Secreted RxLR effector protein 31 (76 aa).

Residues 1 to 24 (MRHCACLFHLFLIGFLCNVYFSAC) form the signal peptide. Positions 49–64 (RILRANDSEFLLTEER) match the RxLR-dEER motif. N54 carries an N-linked (GlcNAc...) asparagine glycan.

The protein belongs to the RxLR effector family.

The protein localises to the secreted. The protein resides in the host nucleus. It is found in the host cytoplasm. Secreted effector that dos not suppress the host cell death induced by cell death-inducing proteins. This Plasmopara viticola (Downy mildew of grapevine) protein is Secreted RxLR effector protein 31.